Here is a 346-residue protein sequence, read N- to C-terminus: Biotin synthase (346 aa).

One can recognise a Radical SAM core domain in the interval 38–256 (QQVQVSTLLS…IAVARIMMPT (219 aa)). Residues C53, C57, and C60 each contribute to the [4Fe-4S] cluster site. [2Fe-2S] cluster is bound by residues C97, C128, C188, and R260.

Belongs to the radical SAM superfamily. Biotin synthase family. Homodimer. The cofactor is [4Fe-4S] cluster. Requires [2Fe-2S] cluster as cofactor.

The catalysed reaction is (4R,5S)-dethiobiotin + (sulfur carrier)-SH + 2 reduced [2Fe-2S]-[ferredoxin] + 2 S-adenosyl-L-methionine = (sulfur carrier)-H + biotin + 2 5'-deoxyadenosine + 2 L-methionine + 2 oxidized [2Fe-2S]-[ferredoxin]. The protein operates within cofactor biosynthesis; biotin biosynthesis; biotin from 7,8-diaminononanoate: step 2/2. Its function is as follows. Catalyzes the conversion of dethiobiotin (DTB) to biotin by the insertion of a sulfur atom into dethiobiotin via a radical-based mechanism. The chain is Biotin synthase from Salmonella dublin (strain CT_02021853).